Here is a 221-residue protein sequence, read N- to C-terminus: Transcription factor HES-4 (221 aa).

Low complexity predominate over residues 1 to 22; sequence MAADTPGKPSASPMAGAPASAS. The tract at residues 1–49 is disordered; that stretch reads MAADTPGKPSASPMAGAPASASRTPDKPRSAAEHRKSSKPVMEKRRRAR. Positions 24 to 35 are enriched in basic and acidic residues; sequence TPDKPRSAAEHR. Residues 34–91 enclose the bHLH domain; sequence HRKSSKPVMEKRRRARINESLAQLKTLILDALRKESSRHSKLEKADILEMTVRHLRSL. The Orange domain occupies 110-143; that stretch reads YRAGFHECLAEVNRFLAGCEGVPADVRSRLLGHL. The disordered stretch occupies residues 201-221; the sequence is LPAAPRAGPQGPGGPWRPWLR. Positions 216–219 match the WRPW motif motif; the sequence is WRPW.

Transcription repression requires formation of a complex with a corepressor protein of the Groucho/TLE family.

The protein localises to the nucleus. Its function is as follows. Transcriptional repressor. Binds DNA on N-box motifs: 5'-CACNAG-3'. The protein is Transcription factor HES-4 (HES4) of Homo sapiens (Human).